The following is a 434-amino-acid chain: Lecithin-cholesterol acyltransferase-like 1 (434 aa).

Residue serine 191 is the Acyl-ester intermediate of the active site. Residues aspartate 354 and histidine 386 each act as charge relay system in the active site.

It belongs to the AB hydrolase superfamily. Lipase family.

The sequence is that of Lecithin-cholesterol acyltransferase-like 1 from Oryza sativa subsp. japonica (Rice).